Here is a 441-residue protein sequence, read N- to C-terminus: Na(+)/H(+) antiporter NhaA 2 (441 aa).

The next 12 helical transmembrane spans lie at 34-54 (VGGA…NSPW), 77-97 (LTLG…VVGL), 115-135 (ALPM…FVAV), 146-166 (GWAI…AVIS), 176-196 (FLLT…AVFY), 199-219 (EINL…ALCV), 225-245 (SWWL…ESGV), 249-269 (VAGV…AGGP), 290-310 (VAVP…VSGL), 317-337 (PITL…IFLT), 355-375 (WIDV…SLLI), and 389-409 (FVKV…AVLL).

The protein belongs to the NhaA Na(+)/H(+) (TC 2.A.33) antiporter family.

It is found in the cell membrane. It catalyses the reaction Na(+)(in) + 2 H(+)(out) = Na(+)(out) + 2 H(+)(in). Functionally, na(+)/H(+) antiporter that extrudes sodium in exchange for external protons. The protein is Na(+)/H(+) antiporter NhaA 2 of Mycobacterium sp. (strain MCS).